Reading from the N-terminus, the 620-residue chain is Origin recognition complex subunit 2 (620 aa).

Positions 1-184 (MLNGEDFVEH…PSKKSLTTNH (184 aa)) are disordered. The span at 13–23 (ILSSPAKSRNV) shows a compositional bias: polar residues. The span at 26–36 (KRVDPHGERQL) shows a compositional bias: basic and acidic residues. Residue threonine 60 is modified to Phosphothreonine. Positions 83 to 101 (KIQEELTDRIKKDEKDTIS) are enriched in basic and acidic residues. Over residues 113–127 (SGNVNEESKTSNNKQ) the composition is skewed to polar residues. The segment covering 128-143 (VMEKTGIKEKREREKI) has biased composition (basic and acidic residues). Residues 145–166 (VATTTYEDNVTPQTDDNFVSNS) are compositionally biased toward polar residues. At threonine 187 the chain carries Phosphothreonine. Serine 188 is modified (phosphoserine). A compositionally biased stretch (polar residues) spans 204–218 (STSPGKLTLSRNFTP). Residues 204–225 (STSPGKLTLSRNFTPTPVPKNK) are disordered.

This sequence belongs to the ORC2 family. In terms of assembly, component of the origin recognition complex (ORC) composed of at least ORC1, ORC2, ORC3, ORC4, ORC5 and ORC6. Interacts with MCM10 and TAH11.

Its subcellular location is the nucleus. Its function is as follows. Component of the origin recognition complex (ORC) that binds origins of replication. It has a role in both chromosomal replication and mating type transcriptional silencing. Binds to the ARS consensus sequence (ACS) of origins of replication. The sequence is that of Origin recognition complex subunit 2 (ORC2) from Saccharomyces cerevisiae (strain ATCC 204508 / S288c) (Baker's yeast).